Here is a 364-residue protein sequence, read N- to C-terminus: DNA replication and repair protein RecF (364 aa).

Residue 30 to 37 (GNNGQGKT) coordinates ATP.

Belongs to the RecF family.

It is found in the cytoplasm. The RecF protein is involved in DNA metabolism; it is required for DNA replication and normal SOS inducibility. RecF binds preferentially to single-stranded, linear DNA. It also seems to bind ATP. The chain is DNA replication and repair protein RecF from Geotalea daltonii (strain DSM 22248 / JCM 15807 / FRC-32) (Geobacter daltonii).